The sequence spans 189 residues: Pyridoxal 5'-phosphate synthase subunit PdxT (189 aa).

Position 46–48 (46–48 (GES)) interacts with L-glutamine. The Nucleophile role is filled by C78. Residues R107 and 136–137 (IR) contribute to the L-glutamine site. Residues H173 and E175 each act as charge relay system in the active site.

The protein belongs to the glutaminase PdxT/SNO family. As to quaternary structure, in the presence of PdxS, forms a dodecamer of heterodimers. Only shows activity in the heterodimer.

The enzyme catalyses aldehydo-D-ribose 5-phosphate + D-glyceraldehyde 3-phosphate + L-glutamine = pyridoxal 5'-phosphate + L-glutamate + phosphate + 3 H2O + H(+). The catalysed reaction is L-glutamine + H2O = L-glutamate + NH4(+). The protein operates within cofactor biosynthesis; pyridoxal 5'-phosphate biosynthesis. Catalyzes the hydrolysis of glutamine to glutamate and ammonia as part of the biosynthesis of pyridoxal 5'-phosphate. The resulting ammonia molecule is channeled to the active site of PdxS. The sequence is that of Pyridoxal 5'-phosphate synthase subunit PdxT from Roseiflexus castenholzii (strain DSM 13941 / HLO8).